Here is a 100-residue protein sequence, read N- to C-terminus: UPF0213 protein YhbQ (100 aa).

One can recognise a GIY-YIG domain in the interval 2 to 77; sequence TPWFLYLIRT…KQLTKRQKER (76 aa).

The protein belongs to the UPF0213 family.

The chain is UPF0213 protein YhbQ from Escherichia coli O139:H28 (strain E24377A / ETEC).